The chain runs to 265 residues: Glutamate racemase (265 aa).

Substrate contacts are provided by residues 12-13 (DS) and 44-45 (YG). The active-site Proton donor/acceptor is the cysteine 75. Position 76–77 (76–77 (NT)) interacts with substrate. The active-site Proton donor/acceptor is cysteine 186. A substrate-binding site is contributed by 187–188 (TH).

It belongs to the aspartate/glutamate racemases family.

The enzyme catalyses L-glutamate = D-glutamate. It functions in the pathway cell wall biogenesis; peptidoglycan biosynthesis. Functionally, provides the (R)-glutamate required for cell wall biosynthesis. This Pseudomonas entomophila (strain L48) protein is Glutamate racemase.